The following is a 930-amino-acid chain: Dual serine/threonine and tyrosine protein kinase (930 aa).

Positions 383–428 (RKENELYESLMNIANRKQEEMKDMIIETLSNMKEELLEDAANMEFK) form a coiled coil. A Protein kinase domain is found at 653 to 907 (PKLGRELGRG…PLLGIVQPML (255 aa)). Residues 659–667 (LGRGQYGVV) and Lys-682 contribute to the ATP site. The active-site Proton acceptor is the Asp-778.

This sequence belongs to the protein kinase superfamily. Ser/Thr protein kinase family. As to expression, widely expressed with the highest expression in brain and ovary.

The protein localises to the cytoplasm. The protein resides in the cell membrane. It is found in the apical cell membrane. It localises to the basolateral cell membrane. Its subcellular location is the cell junction. The catalysed reaction is L-seryl-[protein] + ATP = O-phospho-L-seryl-[protein] + ADP + H(+). The enzyme catalyses L-threonyl-[protein] + ATP = O-phospho-L-threonyl-[protein] + ADP + H(+). It carries out the reaction L-tyrosyl-[protein] + ATP = O-phospho-L-tyrosyl-[protein] + ADP + H(+). In terms of biological role, may act as a positive regulator of ERK phosphorylation downstream of fibroblast growth factor-receptor activation. May induce both caspase-dependent apoptosis and caspase-independent cell death. This is Dual serine/threonine and tyrosine protein kinase (DSTYK) from Gallus gallus (Chicken).